Reading from the N-terminus, the 707-residue chain is Leucine-rich repeat neuronal protein 3 (707 aa).

An N-terminal signal peptide occupies residues 1–22; that stretch reads MKDTPLQVHVLLGLAITTLVQA. In terms of domain architecture, LRRNT spans 23-69; sequence IDKKVDCPQLCTCEIRPWFTPRSIYMEASTVDCNDLGLLNFPARLPA. Residues 23 to 626 are Extracellular-facing; that stretch reads IDKKVDCPQL…DGKEYGKNHT (604 aa). LRR repeat units follow at residues 70–91, 93–114, 117–138, 141–162, 165–186, 189–210, 213–234, 237–258, 261–282, 285–304, 310–332, and 335–358; these read DTQI…TDFP, NLTG…NVQK, QLLS…CLYG, NLQE…AFIG, NLLR…WFDA, NLEI…NFQP, KLRS…ALAG, NLES…ALQK, NLKF…DFSN, HLKE…DSLA, DLRK…AFFR, and KLES…ESLP. N-linked (GlcNAc...) asparagine glycosylation is found at asparagine 93 and asparagine 103. An N-linked (GlcNAc...) asparagine glycan is attached at asparagine 223. The LRRCT domain occupies 368–421; sequence NPIRCDCVIRWINMNKTNIRFMEPDSLFCVDPPEFQGQNVRQVHFRDMMEICLP. Asparagine 382 carries an N-linked (GlcNAc...) asparagine glycan. Residues 421–514 enclose the Ig-like C2-type domain; the sequence is PLIAPESFPS…DLKSIMIKVG (94 aa). Residues cysteine 444 and cysteine 496 are joined by a disulfide bond. N-linked (GlcNAc...) asparagine glycans are attached at residues asparagine 522, asparagine 579, asparagine 608, and asparagine 624. The 92-residue stretch at 523-614 folds into the Fibronectin type-III domain; it reads GSLNIKIRDI…QCVNVTTKSL (92 aa). A helical transmembrane segment spans residues 627–647; the sequence is VFVACVGGLLGIIGVMCLFSC. Residues 648-707 are Cytoplasmic-facing; it reads VSQEGSSEGEHSYAVNHCHKPALAFSELYPPLINLWESSKEKRATLEVKATAIGVPTNMS.

Expressed in the brain, in Stronger expression in the ventricular zone and anlage of thalamus, spinal cord, and dorsal root ganglion in 11-17 dpc cerebellum and cerebral cortex in adults.

The protein resides in the membrane. The protein is Leucine-rich repeat neuronal protein 3 (Lrrn3) of Mus musculus (Mouse).